The primary structure comprises 406 residues: Methyltransferase cfoD (406 aa).

S-adenosyl-L-methionine-binding residues include D270 and R312. Residue H315 is the Proton acceptor of the active site.

This sequence belongs to the class I-like SAM-binding methyltransferase superfamily. Cation-independent O-methyltransferase family.

The protein operates within secondary metabolite biosynthesis; flavonoid biosynthesis. In terms of biological role, methyltransferase; part of the gene cluster that mediates the biosynthesis of chlorflavonin, a fungal flavonoid with acetolactate synthase inhibitory activity. Within the pathway, cfoD is responsible for the methylation at position C3-OH of flavonoid. The pathway begins with the PKS-NRPS hybrid synthetase cfoA that uses benzoic acid or p-hydroxybenzoic acid as a starter unit with four rounds of chain elongation using malonyl-CoA to form the chalcone skeleton. Then, a new type of chalcone isomerase, cfoK, catalyzes the conversion of the chalcone into a flavanone by a histidine-mediated oxa-Michael addition mechanism. The desaturation of flavanone to flavone is catalyzed by a new type of flavone synthase, the flavin mononucleotide (FMN)-dependent oxidoreductase cfoJ. Monooxygenases cfoF, cfoG, and P450 cfoH are responsible for the hydroxylation of the flavonoid skeleton at sites C3, C8, and C2', respectively. Like cfoF, the dehydratase cfoI also plays a role in the hydroxylation of position C3. Methyltransferases cfoB, cfoC, and cfoD then catalyze the methylation of C7-OH, C8-OH, and C3-OH, respectively. Finally, the monooxygenase cfoE is responsible for the chlorination of flavonoid at position C3'. This Aspergillus candidus protein is Methyltransferase cfoD.